The chain runs to 372 residues: Aminomethyltransferase (372 aa).

It belongs to the GcvT family. The glycine cleavage system is composed of four proteins: P, T, L and H.

The catalysed reaction is N(6)-[(R)-S(8)-aminomethyldihydrolipoyl]-L-lysyl-[protein] + (6S)-5,6,7,8-tetrahydrofolate = N(6)-[(R)-dihydrolipoyl]-L-lysyl-[protein] + (6R)-5,10-methylene-5,6,7,8-tetrahydrofolate + NH4(+). Its function is as follows. The glycine cleavage system catalyzes the degradation of glycine. The protein is Aminomethyltransferase of Rubrobacter xylanophilus (strain DSM 9941 / JCM 11954 / NBRC 16129 / PRD-1).